Consider the following 228-residue polypeptide: 6-carboxyhexanoate--CoA ligase (228 aa).

Belongs to the BioW family. As to quaternary structure, homodimer. The cofactor is Mg(2+).

It carries out the reaction heptanedioate + ATP + CoA = 6-carboxyhexanoyl-CoA + AMP + diphosphate. It functions in the pathway metabolic intermediate metabolism; pimeloyl-CoA biosynthesis; pimeloyl-CoA from pimelate: step 1/1. Its function is as follows. Catalyzes the transformation of pimelate into pimeloyl-CoA with concomitant hydrolysis of ATP to AMP. The polypeptide is 6-carboxyhexanoate--CoA ligase (Staphylococcus epidermidis (strain ATCC 12228 / FDA PCI 1200)).